The primary structure comprises 177 residues: Nucleoside triphosphate/diphosphate phosphatase (177 aa).

Arginine 23 serves as the catalytic Proton donor. Residues asparagine 87, aspartate 103, aspartate 105, aspartate 107, aspartate 120, and glutamate 123 each coordinate Mg(2+).

This sequence belongs to the Ntdp family. Mg(2+) serves as cofactor.

It catalyses the reaction a ribonucleoside 5'-triphosphate + H2O = a ribonucleoside 5'-diphosphate + phosphate + H(+). The catalysed reaction is a ribonucleoside 5'-diphosphate + H2O = a ribonucleoside 5'-phosphate + phosphate + H(+). Functionally, has nucleoside phosphatase activity towards nucleoside triphosphates and nucleoside diphosphates. The polypeptide is Nucleoside triphosphate/diphosphate phosphatase (Streptococcus thermophilus (strain CNRZ 1066)).